A 190-amino-acid chain; its full sequence is Guanylate kinase (190 aa).

In terms of domain architecture, Guanylate kinase-like spans 7-186; it reads GKLIVFSAPS…AVDDVEAAIV (180 aa). 14–21 provides a ligand contact to ATP; it reads APSGAGKT.

This sequence belongs to the guanylate kinase family.

The protein resides in the cytoplasm. The enzyme catalyses GMP + ATP = GDP + ADP. Its function is as follows. Essential for recycling GMP and indirectly, cGMP. This chain is Guanylate kinase, found in Chlorobium chlorochromatii (strain CaD3).